The chain runs to 526 residues: Cytochrome P450 monooxygenase patI (526 aa).

Over 1–6 (MDILQL) the chain is Cytoplasmic. The helical transmembrane segment at 7–29 (APTHLLAILLSSTSALFLITYLL) threads the bilayer. At 30 to 526 (RAGHRPSDLP…EAQEVFARFD (497 aa)) the chain is on the lumenal side. Asn81 carries an N-linked (GlcNAc...) asparagine glycan. Cys446 is a heme binding site.

Belongs to the cytochrome P450 family. Requires heme as cofactor.

Its subcellular location is the endoplasmic reticulum membrane. The catalysed reaction is 3-hydroxybenzyl alcohol + reduced [NADPH--hemoprotein reductase] + O2 = gentisyl alcohol + oxidized [NADPH--hemoprotein reductase] + H2O + H(+). It functions in the pathway mycotoxin biosynthesis; patulin biosynthesis. Functionally, cytochrome P450 monooxygenase; part of the gene cluster that mediates the biosynthesis of patulin, an acetate-derived tetraketide mycotoxin produced by several fungal species that shows antimicrobial properties against several bacteria. PatI catalyzes the conversion of m-hydroxybenzyl alcohol into gentisyl alcohol. The pathway begins with the synthesis of 6-methylsalicylic acid by the polyketide synthase (PKS) patK via condensation of acetate and malonate units. The 6-methylsalicylic acid decarboxylase patG then catalyzes the decarboxylation of 6-methylsalicylic acid to yield m-cresol (also known as 3-methylphenol). These first reactions occur in the cytosol. The intermediate m-cresol is then transported into the endoplasmic reticulum where the cytochrome P450 monooxygenase patH converts it to m-hydroxybenzyl alcohol, which is further converted to gentisyl alcohol by the cytochrome P450 monooxygenase patI. The oxidoreductases patJ and patO further convert gentisyl alcohol to isoepoxydon in the vacuole. PatN catalyzes then the transformation of isoepoxydon into phyllostine. The cluster protein patF is responsible for the conversion from phyllostine to neopatulin whereas the alcohol dehydrogenase patD converts neopatulin to E-ascladiol. The steps between isoepoxydon and E-ascladiol occur in the cytosol, and E-ascladiol is probably secreted to the extracellular space by one of the cluster-specific transporters patC or patM. Finally, the secreted patulin synthase patE catalyzes the conversion of E-ascladiol to patulin. The protein is Cytochrome P450 monooxygenase patI of Penicillium expansum (Blue mold rot fungus).